The chain runs to 386 residues: Benzoyl-CoA reductase subunit C (386 aa).

Belongs to the FldB/FldC dehydratase alpha/beta subunit family. In terms of assembly, heterotetramer composed of A, B, C, and D subunits. Iron-sulfur cluster serves as cofactor. An oxidized flavin is required as a cofactor.

It carries out the reaction cyclohexa-1,5-diene-1-carbonyl-CoA + oxidized 2[4Fe-4S]-[ferredoxin] + 2 ADP + 2 phosphate = reduced 2[4Fe-4S]-[ferredoxin] + benzoyl-CoA + 2 ATP + 2 H2O. The enzyme catalyses 3-hydroxybenzoyl-CoA + AH2 + 2 ATP + 2 H2O = 3-hydroxycyclohexa-1,5-diene-1-carbonyl-CoA + A + 2 ADP + 2 phosphate + 2 H(+). Functionally, catalyzes the anaerobic reduction of benzoyl-CoA and 3-hydroxybenzoyl-CoA to form cyclohexa-1,5-diene-1-carbonyl-CoA and 3-hydroxycyclohexa-1,5-diene-1-carbonyl-CoA, respectively. The enzyme also reduces other benzoyl-CoA analogs with small substituents at the aromatic ring. This Thauera aromatica protein is Benzoyl-CoA reductase subunit C (bcrC).